The primary structure comprises 351 residues: AT-hook motif nuclear-localized protein 10 (351 aa).

Residues 1–151 (MSGSETGLMA…RPPGSSSKRL (151 aa)) form a disordered region. The segment covering 23–37 (HQQQQHSQAQPQQSQ) has biased composition (low complexity). The span at 60 to 77 (SPPQQYQPNSAGENSVLN) shows a compositional bias: polar residues. A Bipartite nuclear localization signal motif is present at residues 97-105 (KKRRGRPRK). 2 consecutive DNA-binding regions (a.T hook) follow at residues 97–109 (KKRRGRPRKYGPD) and 138–149 (KKRGRPPGSSSK). The region spanning 159-301 (TGIGFTPHVL…QMGLSSPVLP (143 aa)) is the PPC domain. Polar residues-rich tracts occupy residues 310–325 (MTPSSPQSRGTMSESS) and 334–351 (IHQSTGGPYNNTINMPWK). Positions 310-351 (MTPSSPQSRGTMSESSCGGGHGSPIHQSTGGPYNNTINMPWK) are disordered.

Its subcellular location is the nucleus. In terms of biological role, transcription factor that specifically binds AT-rich DNA sequences related to the nuclear matrix attachment regions (MARs). The protein is AT-hook motif nuclear-localized protein 10 of Arabidopsis thaliana (Mouse-ear cress).